Reading from the N-terminus, the 450-residue chain is Ribosomal protein uS12 methylthiotransferase RimO (450 aa).

In terms of domain architecture, MTTase N-terminal spans 7 to 123 (QKVSMVSLGC…IAEILAEKSG (117 aa)). [4Fe-4S] cluster-binding residues include cysteine 16, cysteine 52, cysteine 86, cysteine 161, cysteine 165, and cysteine 168. Residues 147–377 (SSPAWFSYLK…MRIQARLSFK (231 aa)) enclose the Radical SAM core domain. A TRAM domain is found at 380–448 (RELIGTTEQV…DYDLIGEIQE (69 aa)).

It belongs to the methylthiotransferase family. RimO subfamily. The cofactor is [4Fe-4S] cluster.

It is found in the cytoplasm. The catalysed reaction is L-aspartate(89)-[ribosomal protein uS12]-hydrogen + (sulfur carrier)-SH + AH2 + 2 S-adenosyl-L-methionine = 3-methylsulfanyl-L-aspartate(89)-[ribosomal protein uS12]-hydrogen + (sulfur carrier)-H + 5'-deoxyadenosine + L-methionine + A + S-adenosyl-L-homocysteine + 2 H(+). Catalyzes the methylthiolation of an aspartic acid residue of ribosomal protein uS12. This is Ribosomal protein uS12 methylthiotransferase RimO from Pelobacter propionicus (strain DSM 2379 / NBRC 103807 / OttBd1).